A 121-amino-acid polypeptide reads, in one-letter code: Small ribosomal subunit protein uS13 (121 aa).

Positions 92–121 are disordered; it reads HKAGLPVRGQKTHSNARTRKGPRLTKIKKR. Positions 101–121 are enriched in basic residues; sequence QKTHSNARTRKGPRLTKIKKR.

Belongs to the universal ribosomal protein uS13 family. As to quaternary structure, part of the 30S ribosomal subunit. Forms a loose heterodimer with protein S19. Forms two bridges to the 50S subunit in the 70S ribosome.

Functionally, located at the top of the head of the 30S subunit, it contacts several helices of the 16S rRNA. In the 70S ribosome it contacts the 23S rRNA (bridge B1a) and protein L5 of the 50S subunit (bridge B1b), connecting the 2 subunits; these bridges are implicated in subunit movement. Contacts the tRNAs in the A and P-sites. This Petrotoga mobilis (strain DSM 10674 / SJ95) protein is Small ribosomal subunit protein uS13.